The chain runs to 486 residues: Replication factor C large subunit (486 aa).

46–53 (GPPGSGKT) contacts ATP. A disordered region spans residues 419–486 (VKKETPKKTE…KKQATLDSFF (68 aa)). Basic and acidic residues-rich tracts occupy residues 420-432 (KKET…KPKE) and 442-480 (RISE…KKQA).

It belongs to the activator 1 small subunits family. RfcL subfamily. As to quaternary structure, heteromultimer composed of small subunits (RfcS) and large subunits (RfcL).

Its function is as follows. Part of the RFC clamp loader complex which loads the PCNA sliding clamp onto DNA. This is Replication factor C large subunit from Methanococcus maripaludis (strain DSM 14266 / JCM 13030 / NBRC 101832 / S2 / LL).